The following is a 520-amino-acid chain: Peptide chain release factor 3 (520 aa).

Positions 8–277 (ESRKTFAIIS…FAPMPNARQT (270 aa)) constitute a tr-type G domain. Residues 17 to 24 (SHPDAGKT), 85 to 89 (DTPGH), and 139 to 142 (NKLD) each bind GTP.

Belongs to the TRAFAC class translation factor GTPase superfamily. Classic translation factor GTPase family. PrfC subfamily.

It is found in the cytoplasm. Functionally, increases the formation of ribosomal termination complexes and stimulates activities of RF-1 and RF-2. It binds guanine nucleotides and has strong preference for UGA stop codons. It may interact directly with the ribosome. The stimulation of RF-1 and RF-2 is significantly reduced by GTP and GDP, but not by GMP. The protein is Peptide chain release factor 3 of Staphylococcus aureus (strain USA300 / TCH1516).